Consider the following 141-residue polypeptide: Acetyltransferase YpeA (141 aa).

The 141-residue stretch at 1–141 (MEIRVFRQED…GKRLIEDEEY (141 aa)) folds into the N-acetyltransferase domain.

The protein belongs to the acetyltransferase family. YpeA subfamily.

The chain is Acetyltransferase YpeA from Shigella boydii serotype 4 (strain Sb227).